Consider the following 363-residue polypeptide: Ribonuclease P protein subunit p40 (363 aa).

In terms of assembly, component of nuclear RNase P and RNase MRP ribonucleoproteins. RNase P consists of a catalytic RNA moiety and about 10 protein subunits; POP1, POP4, POP5, POP7, RPP14, RPP21, RPP25, RPP30, RPP38 and RPP40. Within the RNase P complex, POP1, POP7 and RPP25 form the 'finger' subcomplex, POP5, RPP14, RPP40 and homodimeric RPP30 form the 'palm' subcomplex, and RPP21, POP4 and RPP38 form the 'wrist' subcomplex. All subunits of the RNase P complex interact with the catalytic RNA. Several subunits of RNase P are also part of the RNase MRP complex. RNase MRP consists of a catalytic RNA moiety and about 8 protein subunits; POP1, POP7, RPP25, RPP30, RPP38, RPP40 and possibly also POP4 and POP5.

The protein resides in the nucleus. It is found in the nucleolus. Component of ribonuclease P, a ribonucleoprotein complex that generates mature tRNA molecules by cleaving their 5'-ends. Also a component of the MRP ribonuclease complex, which cleaves pre-rRNA sequences. The polypeptide is Ribonuclease P protein subunit p40 (Rpp40) (Mus musculus (Mouse)).